We begin with the raw amino-acid sequence, 296 residues long: Telomere repeat-binding factor 4 (296 aa).

The region spanning 1–62 (MGNQKLKWTA…WRNLSVAPGI (62 aa)) is the HTH myb-type domain. The H-T-H motif DNA-binding region spans 28-58 (WKNILRDPELAEQLSSRSNIDLKDKWRNLSV). Residues 126–200 (NAPRYDGMIF…STQNFYKMND (75 aa)) enclose the H15 domain. The segment at 197–232 (KMNDNSLVQRTPHVARPKESNTKSRQQTNSQGPSIS) is disordered. Residues 219–232 (KSRQQTNSQGPSIS) show a composition bias toward polar residues. A coiled-coil region spans residues 245–282 (KLVEVENKLDVSKGAAEEIERLMKLAEEADEMLVIARE).

It belongs to the histone H1/H5 family. SMH subfamily.

The protein resides in the nucleus. Its subcellular location is the chromosome. Binds preferentially double-stranded telomeric repeats. This chain is Telomere repeat-binding factor 4, found in Arabidopsis thaliana (Mouse-ear cress).